Reading from the N-terminus, the 328-residue chain is Lipoate--protein ligase 1 (328 aa).

The BPL/LPL catalytic domain maps to 27–214 (PAEESYFLFY…TIFGETEVEE (188 aa)). Residues Arg-69, 74–77 (GAVY), and Lys-131 contribute to the ATP site. Residue Lys-131 coordinates (R)-lipoate.

It catalyses the reaction L-lysyl-[lipoyl-carrier protein] + (R)-lipoate + ATP = N(6)-[(R)-lipoyl]-L-lysyl-[lipoyl-carrier protein] + AMP + diphosphate + H(+). Its pathway is protein modification; protein lipoylation via exogenous pathway; protein N(6)-(lipoyl)lysine from lipoate: step 1/2. It participates in protein modification; protein lipoylation via exogenous pathway; protein N(6)-(lipoyl)lysine from lipoate: step 2/2. Functionally, catalyzes the lipoylation of proteins, such as GcvH (SAV0833) and GcvH-L (SAV0324), likely via the ATP-dependent activation of lipoate to lipoyl-AMP and the transfer of the activated lipoyl onto the lipoyl domain of the target protein. The protein is Lipoate--protein ligase 1 of Staphylococcus aureus (strain Mu50 / ATCC 700699).